Consider the following 188-residue polypeptide: Peptidyl-tRNA hydrolase (188 aa).

Tyr-18 contacts tRNA. The Proton acceptor role is filled by His-23. TRNA-binding residues include Tyr-67, Asn-69, and Asn-115.

Belongs to the PTH family. As to quaternary structure, monomer.

The protein resides in the cytoplasm. The enzyme catalyses an N-acyl-L-alpha-aminoacyl-tRNA + H2O = an N-acyl-L-amino acid + a tRNA + H(+). Functionally, hydrolyzes ribosome-free peptidyl-tRNAs (with 1 or more amino acids incorporated), which drop off the ribosome during protein synthesis, or as a result of ribosome stalling. Its function is as follows. Catalyzes the release of premature peptidyl moieties from peptidyl-tRNA molecules trapped in stalled 50S ribosomal subunits, and thus maintains levels of free tRNAs and 50S ribosomes. The protein is Peptidyl-tRNA hydrolase of Salinibacter ruber (strain DSM 13855 / M31).